The sequence spans 525 residues: Endoglucanase 10 (525 aa).

The signal sequence occupies residues 1 to 26 (MEEKSKSRGWCGWFIAIIVLASVILA). Residue D109 is the Nucleophile of the active site. N259 carries N-linked (GlcNAc...) asparagine glycosylation. Residue H442 is part of the active site. Residues N464 and N484 are each glycosylated (N-linked (GlcNAc...) asparagine). Catalysis depends on residues D489 and E498.

The protein belongs to the glycosyl hydrolase 9 (cellulase E) family.

It is found in the secreted. It catalyses the reaction Endohydrolysis of (1-&gt;4)-beta-D-glucosidic linkages in cellulose, lichenin and cereal beta-D-glucans.. In Arabidopsis thaliana (Mouse-ear cress), this protein is Endoglucanase 10.